The sequence spans 458 residues: UDP-N-acetylmuramoylalanine--D-glutamate ligase (458 aa).

Gly124 to Thr130 contacts ATP.

The protein belongs to the MurCDEF family.

The protein localises to the cytoplasm. The enzyme catalyses UDP-N-acetyl-alpha-D-muramoyl-L-alanine + D-glutamate + ATP = UDP-N-acetyl-alpha-D-muramoyl-L-alanyl-D-glutamate + ADP + phosphate + H(+). It participates in cell wall biogenesis; peptidoglycan biosynthesis. Functionally, cell wall formation. Catalyzes the addition of glutamate to the nucleotide precursor UDP-N-acetylmuramoyl-L-alanine (UMA). The protein is UDP-N-acetylmuramoylalanine--D-glutamate ligase of Clostridium beijerinckii (strain ATCC 51743 / NCIMB 8052) (Clostridium acetobutylicum).